Here is a 104-residue protein sequence, read N- to C-terminus: Large ribosomal subunit protein uL24 (104 aa).

Belongs to the universal ribosomal protein uL24 family. As to quaternary structure, part of the 50S ribosomal subunit. In terms of processing, a methylated and unmethylated form are thought to exist.

Functionally, one of two assembly initiator proteins, it binds directly to the 5'-end of the 23S rRNA, where it nucleates assembly of the 50S subunit. Its function is as follows. One of the proteins that surrounds the polypeptide exit tunnel on the outside of the subunit. This Rhodopseudomonas palustris (strain ATCC BAA-98 / CGA009) protein is Large ribosomal subunit protein uL24.